The sequence spans 297 residues: MSSLAAPQTGLLRQYLVLTKPRVTQLAVFCAVIGMFLAAPGMPDLSHVVFGTLGIWLLAAAAFAINCLIEQEVDARMLRTARRATARGTISDIQVLSLSGLLGGAGMLVLYHLVNPLTMWLTFATFVGYAIIYTVILKPRTPQNIVIGGLSGAMPPALGWAAVADSVPAEAWVLVLIIFIWTPPHFWALALYRNNDYIKAGLPMLPVTHGQQFTRLHILLYSFALLATTLLPYAIRMSGALYLASALALGGMFVWYAWRLYREYSDALARRLFRFSILYLALLFGALLIDHWVGLLR.

The next 9 membrane-spanning stretches (helical) occupy residues 23 to 43, 49 to 69, 93 to 113, 117 to 137, 144 to 164, 171 to 191, 215 to 235, 238 to 258, and 275 to 295; these read VTQLAVFCAVIGMFLAAPGMP, VFGTLGIWLLAAAAFAINCLI, IQVLSLSGLLGGAGMLVLYHL, LTMWLTFATFVGYAIIYTVIL, NIVIGGLSGAMPPALGWAAVA, AWVLVLIIFIWTPPHFWALAL, RLHILLYSFALLATTLLPYAI, SGALYLASALALGGMFVWYAW, and FSILYLALLFGALLIDHWVGL.

The protein belongs to the UbiA prenyltransferase family. Protoheme IX farnesyltransferase subfamily.

Its subcellular location is the cell inner membrane. The catalysed reaction is heme b + (2E,6E)-farnesyl diphosphate + H2O = Fe(II)-heme o + diphosphate. It functions in the pathway porphyrin-containing compound metabolism; heme O biosynthesis; heme O from protoheme: step 1/1. In terms of biological role, converts heme B (protoheme IX) to heme O by substitution of the vinyl group on carbon 2 of heme B porphyrin ring with a hydroxyethyl farnesyl side group. In Bordetella bronchiseptica (strain ATCC BAA-588 / NCTC 13252 / RB50) (Alcaligenes bronchisepticus), this protein is Protoheme IX farnesyltransferase.